The primary structure comprises 368 residues: POU domain, class 3, transcription factor 1 (368 aa).

Over residues 1 to 16 the composition is skewed to polar residues; it reads MATTAQYIPRNNSLPS. Disordered regions lie at residues 1–28, 69–88, 100–134, and 147–193; these read MATT…DRMH, TDWT…ASVQ, SHLV…NGHQ, and SPQP…PSSD. Over residues 79-88 the composition is skewed to basic and acidic residues; the sequence is QAEHNKASVQ. Positions 105 to 134 are enriched in polar residues; that stretch reads QPTQNSHHGSWAPTTTHHLSPLSPASNGHQ. Over residues 155 to 170 the composition is skewed to basic and acidic residues; the sequence is GLRDPLHDDAGSHDNQ. Positions 187-261 constitute a POU-specific domain; that stretch reads EDAPSSDDLE…LLNKWLEETD (75 aa). The segment at residues 279-338 is a DNA-binding region (homeobox); that stretch reads KRKKRTSIEVGVKGALENHFLKCPKPSAHEITTLAGTLQLEKEVVRVWFCNRRQKEKRMT.

It belongs to the POU transcription factor family. Class-3 subfamily. In terms of tissue distribution, predominantly expressed in the embryonic and adult central nervous system.

The protein resides in the nucleus. In terms of biological role, transcription factor that may play important roles in patterning the embryonic brain. Could directly respond to the reception of the sonic hedgehog (shh) signal. This Danio rerio (Zebrafish) protein is POU domain, class 3, transcription factor 1 (pou3f1).